A 1378-amino-acid chain; its full sequence is MDTNWLYVLLQKSTADPLERLKLGNVILNEVSQRKVSPHPKLVNDFLDVMSGWLTGSNFKVSTIGLEILDAALRTSPDVLASYYFDRCSVLIERMGDAKVQVREMAINLCLQLAYLENSSPVMLLDRLCVPGTGFQHKQWLVKVGSLNILREFLSSSFALVIQQAITLIPQLCRLTNDPNSEVRDVSTQCLIDLMVYGGKPIVAKIAATRLINEQKMATLLQRYQTTVATRGDLPPKHTITMETTPAQPSRNSLLRRSLRSPAKIIHPSASTTSFTSSARLSTPPRPTTTAAQSLSLAPQTPSPLSLPSPSGGQMSRSRDLTRSSLRAPAGISISRYRSSSCAPAAQCAITLDDFKKSFTAVPKTTIYSNHDIREKLELANLVLRNANEDWSKRANQLKLIRSIIINCDENIDRSLLISIINELADALEFSIRDLRSQIVREAAVTCSFLFETFGMEVKNVAECVLPAALAQVAVSTKVIASSAATLTVFIVQKIQTRQIFTTLSELSSSKAKEQRRQLAVVLETLIASWDLKSKQPILKQIAQLVQNAICDADGETRVAGRKAFAKLEQLHGTTADLIFRELDPAKQKMLRDGVSSSSSSLNSDRDNNNQKQQPNQQNISQKFLSQRSASAVDKSIQLSVKPQTTAIPSRPTAMPMNNRLPKSSTSTSFSAVRSSGYGQNQSTTPNRAKTPSDGFAGSSPHYTNGNNNNKSSSSSPSTSTHQTPIQRVASNLGSSSFVASLTQEQANCLQNAMNTAKDEMSKNNEDDEFLLDEIRKTPPKEVPRSYNNSPFKPSNLDSSVHRSYNNNSPFRPSSGSVGSGSNGSVQSIEHILKACTSSSLNEKRDAIVNLNQVITDPNLCQLECKNIGDTLSRLLAEGNNTLIISILDTISIFIKFQYKKLDNWLKLALGKLFAKMGADALPNVKSALSSTQKMFLTTFDPTFQLKAVCDFMCDPVHLLSPKSRLALLEYICLLFEEIWPEDPRCLERQTHLDTPYTRAAIRKMFAWMFDPRIGAILMPACERLVCALFALNAADFTMIFGELPSECRDWAYRILQLNGQQNNQKPIEKEKERFISNNNYKPCPLDNEEIEKPIMKTTYSTYESTRKEYSQTERIATENQYSTPPPPDYRTSTAHLAKNHVDQAAYIRNQLDAIRDFEKADKLNEAMANLHGMMCEGSFTLWNQFFDELLDSIYQILSTFSQSIRKKLALRILQKMCTAQATKLFDSTEIAISKVLQCACTSDDNTMGVAAEDCLRILASHLPLTRVVLISRRILSQDDDDQRGVLILKMLTRMFQDIDIEELHLIVNDVAPCFVTAYESMSSTVRKCAVFGLVALVQRVGMQRMEPHLRTLNASKLNLIDLYVGRAKSSESGASSN.

One copy of the HEAT 1 repeat lies at 168–206 (LIPQLCRLTNDPNSEVRDVSTQCLIDLMVYGGKPIVAKI). 3 disordered regions span residues 231–254 (RGDL…RNSL), 266–325 (IHPS…TRSS), and 590–725 (MLRD…HQTP). Low complexity-rich tracts occupy residues 269–283 (SAST…RLST) and 610–619 (NQKQQPNQQN). 2 stretches are compositionally biased toward polar residues: residues 620–630 (ISQKFLSQRSA) and 637–648 (IQLSVKPQTTAI). The span at 664–676 (SSTSTSFSAVRSS) shows a compositional bias: low complexity. Residues 677-690 (GYGQNQSTTPNRAK) show a composition bias toward polar residues. Residues 704–721 (TNGNNNNKSSSSSPSTST) show a composition bias toward low complexity. A coiled-coil region spans residues 740 to 767 (ASLTQEQANCLQNAMNTAKDEMSKNNED). A compositionally biased stretch (basic and acidic residues) spans 775 to 784 (IRKTPPKEVP). The segment at 775 to 823 (IRKTPPKEVPRSYNNSPFKPSNLDSSVHRSYNNNSPFRPSSGSVGSGSN) is disordered. Over residues 786–812 (SYNNSPFKPSNLDSSVHRSYNNNSPFR) the composition is skewed to polar residues. An HEAT 2 repeat occupies 1305-1341 (HLIVNDVAPCFVTAYESMSSTVRKCAVFGLVALVQRV).

It belongs to the CLASP family.

The protein resides in the cytoplasm. Its subcellular location is the cytoskeleton. In terms of biological role, microtubule plus-end tracking protein that promotes the stabilization of dynamic microtubules. Operates redundantly with cls-2 and cls-3 in regulating microtubule processes which position the spindle during asymmetric cell division. The polypeptide is Protein CLASP-1 (cls-1) (Caenorhabditis elegans).